The chain runs to 399 residues: Elongation factor Tu (399 aa).

The region spanning 10 to 209 (KPHVNIGTIG…AVDDYIPTPV (200 aa)) is the tr-type G domain. Residues 19-26 (GHVDHGKT) are G1. 19-26 (GHVDHGKT) contributes to the GTP binding site. Residue threonine 26 participates in Mg(2+) binding. The G2 stretch occupies residues 62–66 (GITIN). The segment at 83 to 86 (DCPG) is G3. Residues 83-87 (DCPGH) and 138-141 (NKCD) each bind GTP. The interval 138–141 (NKCD) is G4. A G5 region spans residues 175-177 (SAY).

It belongs to the TRAFAC class translation factor GTPase superfamily. Classic translation factor GTPase family. EF-Tu/EF-1A subfamily. In terms of assembly, monomer.

It is found in the cytoplasm. It carries out the reaction GTP + H2O = GDP + phosphate + H(+). GTP hydrolase that promotes the GTP-dependent binding of aminoacyl-tRNA to the A-site of ribosomes during protein biosynthesis. The polypeptide is Elongation factor Tu (Bifidobacterium longum (strain DJO10A)).